Reading from the N-terminus, the 422-residue chain is S-adenosylmethionine synthase (422 aa).

Residue His-16 participates in ATP binding. A Mg(2+)-binding site is contributed by Asp-18. Glu-44 contacts K(+). Residues Glu-57 and Gln-100 each contribute to the L-methionine site. The flexible loop stretch occupies residues 100 to 110; it reads QSPDISQGVSA. ATP-binding positions include 175 to 177, 251 to 252, Asp-260, 266 to 267, Ala-283, and Lys-287; these read DGK, KF, and RK. Asp-260 contributes to the L-methionine binding site. L-methionine is bound at residue Lys-291.

Belongs to the AdoMet synthase family. Homotetramer; dimer of dimers. Requires Mg(2+) as cofactor. The cofactor is K(+).

The protein localises to the cytoplasm. It carries out the reaction L-methionine + ATP + H2O = S-adenosyl-L-methionine + phosphate + diphosphate. Its pathway is amino-acid biosynthesis; S-adenosyl-L-methionine biosynthesis; S-adenosyl-L-methionine from L-methionine: step 1/1. Functionally, catalyzes the formation of S-adenosylmethionine (AdoMet) from methionine and ATP. The overall synthetic reaction is composed of two sequential steps, AdoMet formation and the subsequent tripolyphosphate hydrolysis which occurs prior to release of AdoMet from the enzyme. This chain is S-adenosylmethionine synthase, found in Rippkaea orientalis (strain PCC 8801 / RF-1) (Cyanothece sp. (strain PCC 8801)).